A 273-amino-acid polypeptide reads, in one-letter code: SPRY domain-containing SOCS box protein 1 (273 aa).

Tyr-31 bears the Phosphotyrosine mark. One can recognise a B30.2/SPRY domain in the interval 33–231 (KPTRLDLLLD…IRMRYLNGLD (199 aa)). Positions 232–273 (PEPLPLMDLCRRSVRLALGKERLGAIPALPLPASLKAYLLYQ) constitute an SOCS box domain.

The protein belongs to the SPSB family. In terms of assembly, component of the probable ECS(SPSB1) E3 ubiquitin-protein ligase complex which contains CUL5, RNF7/RBX2, Elongin BC complex and SPSB1. Interacts with CUL5, RNF7, ELOB and ELOC. Directly interacts with MET tyrosine kinase domain in the presence and in the absence of HGF, however HGF treatment has a positive effect on this interaction. When phosphorylated, interacts with RASA1 without affecting its stability. Interacts (via B30.2/SPRY domain) with PAWR; this interaction is direct and occurs in association with the Elongin BC complex. Interacts with EPHB2. Interacts with NOS2.

The protein resides in the cytoplasm. The protein localises to the cytosol. The protein operates within protein modification; protein ubiquitination. Functionally, substrate recognition component of a SCF-like ECS (Elongin BC-CUL2/5-SOCS-box protein) E3 ubiquitin-protein ligase complex which mediates the ubiquitination and subsequent proteasomal degradation of target proteins. Negatively regulates nitric oxide (NO) production and limits cellular toxicity in activated macrophages by mediating the ubiquitination and proteasomal degradation of NOS2. Acts as a bridge which links the NOS2 with the ECS E3 ubiquitin ligase complex components ELOC and CUL5. The sequence is that of SPRY domain-containing SOCS box protein 1 (Spsb1) from Mus musculus (Mouse).